Here is a 361-residue protein sequence, read N- to C-terminus: uncharacterized protein (361 aa).

33–40 (GPINSGKT) contributes to the ATP binding site.

It belongs to the archaeal ATPase family.

This is an uncharacterized protein from Methanocaldococcus jannaschii (strain ATCC 43067 / DSM 2661 / JAL-1 / JCM 10045 / NBRC 100440) (Methanococcus jannaschii).